Reading from the N-terminus, the 393-residue chain is STE20-related kinase adapter protein alpha (393 aa).

A phosphoserine mark is found at Ser2 and Ser9. One can recognise a Protein kinase domain in the interval 32 to 341 (YELLSVIGKG…ASTLLNHSFF (310 aa)). Residue Thr381 is modified to Phosphothreonine; by LKB1.

It belongs to the protein kinase superfamily. STE Ser/Thr protein kinase family. STE20 subfamily. In terms of assembly, component of a trimeric complex composed of STK11/LKB1, STRAD (STRADA or STRADB) and CAB39/MO25 (CAB39/MO25alpha or CAB39L/MO25beta): the complex tethers STK11/LKB1 in the cytoplasm and stimulates its catalytic activity. In terms of tissue distribution, expressed in liver.

Its subcellular location is the nucleus. The protein resides in the cytoplasm. Functionally, pseudokinase which, in complex with CAB39/MO25 (CAB39/MO25alpha or CAB39L/MO25beta), binds to and activates STK11/LKB1. Adopts a closed conformation typical of active protein kinases and binds STK11/LKB1 as a pseudosubstrate, promoting conformational change of STK11/LKB1 in an active conformation. This Rattus norvegicus (Rat) protein is STE20-related kinase adapter protein alpha (Strada).